A 215-amino-acid polypeptide reads, in one-letter code: MGKVYDWFEERLEIQAIADDISSKYVPPHVNIFYCLGGITFTCFLLQVASGFAMTFYYRPTVAEAFASVQYIMTDVNFGWLIRSVHRWSASMMVLTMILHVFRVYLTGGFKKPRELTWVTGVILAVLTVSFGVTGYSLPWDQVGYWAVKIVTGVPDAIPVIGSPLVELLRGSVSVGQSTLTRFYSLHTFILPLLTAVFMLMHFLMIRKQGISGPL.

The chain crosses the membrane as a helical span at residues 32–52 (IFYCLGGITFTCFLLQVASGF). Cys35 lines the heme c pocket. His86 and His100 together coordinate heme b. The next 3 membrane-spanning stretches (helical) occupy residues 90 to 110 (ASMM…TGGF), 116 to 136 (LTWV…VTGY), and 186 to 206 (LHTF…FLMI). 2 residues coordinate heme b: His187 and His202.

It belongs to the cytochrome b family. PetB subfamily. The 4 large subunits of the cytochrome b6-f complex are cytochrome b6, subunit IV (17 kDa polypeptide, PetD), cytochrome f and the Rieske protein, while the 4 small subunits are PetG, PetL, PetM and PetN. The complex functions as a dimer. The cofactor is heme b. Heme c is required as a cofactor.

Its subcellular location is the plastid. It localises to the chloroplast thylakoid membrane. In terms of biological role, component of the cytochrome b6-f complex, which mediates electron transfer between photosystem II (PSII) and photosystem I (PSI), cyclic electron flow around PSI, and state transitions. The sequence is that of Cytochrome b6 from Coleochaete orbicularis (Charophycean green alga).